Consider the following 121-residue polypeptide: Large ribosomal subunit protein bL12 (121 aa).

This sequence belongs to the bacterial ribosomal protein bL12 family. Homodimer. Part of the ribosomal stalk of the 50S ribosomal subunit. Forms a multimeric L10(L12)X complex, where L10 forms an elongated spine to which 2 to 4 L12 dimers bind in a sequential fashion. Binds GTP-bound translation factors.

Its function is as follows. Forms part of the ribosomal stalk which helps the ribosome interact with GTP-bound translation factors. Is thus essential for accurate translation. The sequence is that of Large ribosomal subunit protein bL12 from Pseudomonas fluorescens (strain ATCC BAA-477 / NRRL B-23932 / Pf-5).